The primary structure comprises 310 residues: Cysteine synthase (310 aa).

Lysine 46 bears the N6-(pyridoxal phosphate)lysine mark. Pyridoxal 5'-phosphate is bound by residues asparagine 76, 180–184, and serine 268; that span reads GTGGT.

The protein belongs to the cysteine synthase/cystathionine beta-synthase family. In terms of assembly, homodimer. The cofactor is pyridoxal 5'-phosphate.

The catalysed reaction is O-acetyl-L-serine + hydrogen sulfide = L-cysteine + acetate. The protein operates within amino-acid biosynthesis; L-cysteine biosynthesis; L-cysteine from L-serine: step 2/2. The polypeptide is Cysteine synthase (cysK) (Staphylococcus aureus (strain Mu50 / ATCC 700699)).